Here is a 399-residue protein sequence, read N- to C-terminus: Flavohemoprotein (399 aa).

One can recognise a Globin domain in the interval 1 to 138; the sequence is MLDNKTIEII…IADAFIGIEK (138 aa). His85 provides a ligand contact to heme b. Residues Tyr95 and Glu137 each act as charge relay system in the active site. Residues 149-399 form a reductase region; that stretch reads GGWKEYKPFV…GPQLSLAQSV (251 aa). The 104-residue stretch at 152-255 folds into the FAD-binding FR-type domain; the sequence is KEYKPFVIAK…SAPAGDFVLD (104 aa). Residues Tyr190 and 206–209 contribute to the FAD site; that span reads RQYS. 268 to 273 contributes to the NADP(+) binding site; that stretch reads GVGITP. An FAD-binding site is contributed by 388 to 391; sequence LFGP.

Belongs to the globin family. Two-domain flavohemoproteins subfamily. This sequence in the C-terminal section; belongs to the flavoprotein pyridine nucleotide cytochrome reductase family. Requires heme b as cofactor. FAD is required as a cofactor.

It catalyses the reaction 2 nitric oxide + NADPH + 2 O2 = 2 nitrate + NADP(+) + H(+). The enzyme catalyses 2 nitric oxide + NADH + 2 O2 = 2 nitrate + NAD(+) + H(+). Is involved in NO detoxification in an aerobic process, termed nitric oxide dioxygenase (NOD) reaction that utilizes O(2) and NAD(P)H to convert NO to nitrate, which protects the bacterium from various noxious nitrogen compounds. Therefore, plays a central role in the inducible response to nitrosative stress. This chain is Flavohemoprotein (hmp), found in Bacillus subtilis (strain 168).